The chain runs to 188 residues: Inosine triphosphate pyrophosphatase (188 aa).

7 to 12 (TGNAGK) contributes to the ITP binding site. Glutamate 36 is a Mg(2+) binding site. ITP-binding positions include lysine 48, 64–65 (DT), lysine 81, 140–143 (FGWN), lysine 163, and 168–169 (HR).

This sequence belongs to the HAM1 NTPase family. In terms of assembly, homodimer. The cofactor is Mg(2+). It depends on Mn(2+) as a cofactor.

The protein localises to the cytoplasm. Its subcellular location is the nucleus. The enzyme catalyses ITP + H2O = IMP + diphosphate + H(+). It catalyses the reaction dITP + H2O = dIMP + diphosphate + H(+). The catalysed reaction is XTP + H2O = XMP + diphosphate + H(+). Functionally, pyrophosphatase that hydrolyzes non-canonical purine nucleotides such as inosine triphosphate (ITP), deoxyinosine triphosphate (dITP) or xanthosine 5'-triphosphate (XTP) to their respective monophosphate derivatives. The enzyme does not distinguish between the deoxy- and ribose forms. Probably excludes non-canonical purines from RNA and DNA precursor pools, thus preventing their incorporation into RNA and DNA and avoiding chromosomal lesions. The protein is Inosine triphosphate pyrophosphatase of Yarrowia lipolytica (strain CLIB 122 / E 150) (Yeast).